A 431-amino-acid chain; its full sequence is uncharacterized protein (431 aa).

12 consecutive transmembrane segments (helical) span residues 33 to 53 (VARVGTAAAVTALCGYAVIYL), 63 to 83 (FSVFGVFWGAFGLVTGAANGL), 111 to 131 (VSGMVGLGSLVVIAGSSPLWS), 143 to 163 (VALLSIGLAGFCLHATLLGML), 175 to 195 (LMVADAVIRVVVAAATFVIGW), 197 to 217 (LVGFIWATVAGSVAWLIMLMT), 241 to 261 (AHSIIAAGASAILVMGFPVLL), 273 to 293 (GVVILAVTLTRAPLLVPLTAM), 318 to 338 (LIGGVGAVGMLAAGVVGPWIM), 358 to 378 (AAAVAIAMLTLTGAAAVAAAL), 381 to 401 (AYSLGWVGATVGSGLLLLLPL), and 407 to 427 (TVVALLCGPLVGIGVHLVALA).

This sequence to M.tuberculosis Rv1510 and M.bovis Mb3654.

The protein localises to the cell membrane. This is an uncharacterized protein from Mycobacterium tuberculosis (strain ATCC 25618 / H37Rv).